Here is a 276-residue protein sequence, read N- to C-terminus: MDICGVDSEGKEFNSVQEMWREEIGEGDETKKTQWYRDGVSYWEGVEASVDGVLGGYGHVNDADIIGSEVFLKTLLQERLVNNVGANQHLVALDCGSGIGRITKNLLIRYFNEVDLLEPVAQFLDAARENLASAGSETHKATNFFCVPLQEFTPAAGRYDVIWVQWCIGHLTDNDFVSFFNRAKGYLKPGGFFVVKENLAKNGFVLDKEDHSITRSDPYFKQLFRQCGLHLYRTKDQKGLPQELFAVKMYALTVDTPPKIHRTRSKTRSNRPQIIK.

S-adenosyl-L-methionine-binding positions include Gly-96, Arg-101, 118–120 (EPV), 149–150 (LQ), and Gln-165.

It belongs to the methyltransferase superfamily. NTM1 family.

It catalyses the reaction N-terminal L-alanyl-L-prolyl-L-lysyl-[protein] + 3 S-adenosyl-L-methionine = N-terminal N,N,N-trimethyl-L-alanyl-L-prolyl-L-lysyl-[protein] + 3 S-adenosyl-L-homocysteine + 3 H(+). The enzyme catalyses N-terminal L-seryl-L-prolyl-L-lysyl-[protein] + 3 S-adenosyl-L-methionine = N-terminal N,N,N-trimethyl-L-seryl-L-prolyl-L-lysyl-[protein] + 3 S-adenosyl-L-homocysteine + 3 H(+). It carries out the reaction N-terminal L-prolyl-L-prolyl-L-lysyl-[protein] + 2 S-adenosyl-L-methionine = N-terminal N,N-dimethyl-L-prolyl-L-prolyl-L-lysyl-[protein] + 2 S-adenosyl-L-homocysteine + 2 H(+). Functionally, alpha-N-methyltransferase that methylates the N-terminus of target proteins containing the N-terminal motif [Ala/Pro/Ser]-Pro-Lys when the initiator Met is cleaved. Specifically catalyzes mono-, di- or tri-methylation of exposed alpha-amino group of Ala or Ser residue in the [Ala/Ser]-Pro-Lys motif and mono- or di-methylation of Pro in the Pro-Pro-Lys motif. This chain is Alpha N-terminal protein methyltransferase 1, found in Arabidopsis thaliana (Mouse-ear cress).